A 239-amino-acid polypeptide reads, in one-letter code: Pyridoxine 5'-phosphate synthase (239 aa).

3-amino-2-oxopropyl phosphate is bound at residue asparagine 7. Position 9–10 (9–10) interacts with 1-deoxy-D-xylulose 5-phosphate; sequence DH. Residue arginine 18 coordinates 3-amino-2-oxopropyl phosphate. Histidine 43 serves as the catalytic Proton acceptor. 1-deoxy-D-xylulose 5-phosphate is bound by residues arginine 45 and histidine 50. The Proton acceptor role is filled by glutamate 70. Threonine 100 contacts 1-deoxy-D-xylulose 5-phosphate. Residue histidine 191 is the Proton donor of the active site. 3-amino-2-oxopropyl phosphate-binding positions include glycine 192 and 213–214; that span reads GH.

Belongs to the PNP synthase family. In terms of assembly, homooctamer; tetramer of dimers.

The protein localises to the cytoplasm. The catalysed reaction is 3-amino-2-oxopropyl phosphate + 1-deoxy-D-xylulose 5-phosphate = pyridoxine 5'-phosphate + phosphate + 2 H2O + H(+). The protein operates within cofactor biosynthesis; pyridoxine 5'-phosphate biosynthesis; pyridoxine 5'-phosphate from D-erythrose 4-phosphate: step 5/5. In terms of biological role, catalyzes the complicated ring closure reaction between the two acyclic compounds 1-deoxy-D-xylulose-5-phosphate (DXP) and 3-amino-2-oxopropyl phosphate (1-amino-acetone-3-phosphate or AAP) to form pyridoxine 5'-phosphate (PNP) and inorganic phosphate. The polypeptide is Pyridoxine 5'-phosphate synthase (Geotalea daltonii (strain DSM 22248 / JCM 15807 / FRC-32) (Geobacter daltonii)).